The primary structure comprises 287 residues: Bifunctional protein FolD (287 aa).

Residues 171-173 (GHS) and Ile237 contribute to the NADP(+) site.

Belongs to the tetrahydrofolate dehydrogenase/cyclohydrolase family. Homodimer.

The enzyme catalyses (6R)-5,10-methylene-5,6,7,8-tetrahydrofolate + NADP(+) = (6R)-5,10-methenyltetrahydrofolate + NADPH. It catalyses the reaction (6R)-5,10-methenyltetrahydrofolate + H2O = (6R)-10-formyltetrahydrofolate + H(+). Its pathway is one-carbon metabolism; tetrahydrofolate interconversion. In terms of biological role, catalyzes the oxidation of 5,10-methylenetetrahydrofolate to 5,10-methenyltetrahydrofolate and then the hydrolysis of 5,10-methenyltetrahydrofolate to 10-formyltetrahydrofolate. This Methanosarcina barkeri (strain Fusaro / DSM 804) protein is Bifunctional protein FolD.